Reading from the N-terminus, the 282-residue chain is B3 domain-containing protein At5g06250 (282 aa).

Positions 46–159 (FEKSLTPSDV…RLFIGWRRRG (114 aa)) form a DNA-binding region, TF-B3.

It is found in the nucleus. The sequence is that of B3 domain-containing protein At5g06250 from Arabidopsis thaliana (Mouse-ear cress).